Consider the following 277-residue polypeptide: Putative hydro-lyase BPP3031 (277 aa).

This sequence belongs to the D-glutamate cyclase family.

In Bordetella parapertussis (strain 12822 / ATCC BAA-587 / NCTC 13253), this protein is Putative hydro-lyase BPP3031.